Reading from the N-terminus, the 116-residue chain is NADH-ubiquinone oxidoreductase chain 3 (116 aa).

The next 3 helical transmembrane spans lie at 3–23 (LITT…TISF), 56–76 (FFLI…LLPL), and 87–107 (LTLI…IYEW).

Belongs to the complex I subunit 3 family.

The protein resides in the mitochondrion membrane. The catalysed reaction is a ubiquinone + NADH + 5 H(+)(in) = a ubiquinol + NAD(+) + 4 H(+)(out). Functionally, core subunit of the mitochondrial membrane respiratory chain NADH dehydrogenase (Complex I) that is believed to belong to the minimal assembly required for catalysis. Complex I functions in the transfer of electrons from NADH to the respiratory chain. The immediate electron acceptor for the enzyme is believed to be ubiquinone. The sequence is that of NADH-ubiquinone oxidoreductase chain 3 (MT-ND3) from Oncorhynchus mykiss (Rainbow trout).